The primary structure comprises 493 residues: Ketol-acid reductoisomerase (NADP(+)) (493 aa).

The KARI N-terminal Rossmann domain occupies 17 to 208 (LSQCRFMDRS…GGDRAGVLHS (192 aa)). NADP(+) is bound by residues 45 to 48 (CGAQ), R68, R76, S78, and 108 to 110 (DKQ). H132 is a catalytic residue. G158 serves as a coordination point for NADP(+). 2 KARI C-terminal knotted domains span residues 209–344 (SFIA…NAPS) and 345–486 (SNEH…MKDM). Residues D217, E221, E389, and E393 each coordinate Mg(2+). S414 provides a ligand contact to substrate.

Belongs to the ketol-acid reductoisomerase family. Requires Mg(2+) as cofactor.

It carries out the reaction (2R)-2,3-dihydroxy-3-methylbutanoate + NADP(+) = (2S)-2-acetolactate + NADPH + H(+). It catalyses the reaction (2R,3R)-2,3-dihydroxy-3-methylpentanoate + NADP(+) = (S)-2-ethyl-2-hydroxy-3-oxobutanoate + NADPH + H(+). It functions in the pathway amino-acid biosynthesis; L-isoleucine biosynthesis; L-isoleucine from 2-oxobutanoate: step 2/4. The protein operates within amino-acid biosynthesis; L-valine biosynthesis; L-valine from pyruvate: step 2/4. Functionally, involved in the biosynthesis of branched-chain amino acids (BCAA). Catalyzes an alkyl-migration followed by a ketol-acid reduction of (S)-2-acetolactate (S2AL) to yield (R)-2,3-dihydroxy-isovalerate. In the isomerase reaction, S2AL is rearranged via a Mg-dependent methyl migration to produce 3-hydroxy-3-methyl-2-ketobutyrate (HMKB). In the reductase reaction, this 2-ketoacid undergoes a metal-dependent reduction by NADPH to yield (R)-2,3-dihydroxy-isovalerate. In Shewanella amazonensis (strain ATCC BAA-1098 / SB2B), this protein is Ketol-acid reductoisomerase (NADP(+)).